The following is a 523-amino-acid chain: Tyrosine ammonia-lyase (523 aa).

Tyr-60 functions as the Proton donor/acceptor in the catalytic mechanism. His-89 is a binding site for substrate. The segment at residues 149–151 is a cross-link (5-imidazolinone (Ala-Gly)); the sequence is ASG. Ser-150 carries the post-translational modification 2,3-didehydroalanine (Ser). Residues Arg-303 and 432–436 each bind substrate; that span reads NAANQ.

The protein belongs to the PAL/histidase family. As to quaternary structure, homotetramer. Post-translationally, contains an active site 4-methylidene-imidazol-5-one (MIO), which is formed autocatalytically by cyclization and dehydration of residues Ala-Ser-Gly.

It catalyses the reaction L-tyrosine = (E)-4-coumarate + NH4(+). In terms of biological role, catalyzes the non-oxidative deamination of L-tyrosine. Has very low phenylalanine ammonia-lyase activity (in vitro). In Cereibacter sphaeroides (strain ATCC 17023 / DSM 158 / JCM 6121 / CCUG 31486 / LMG 2827 / NBRC 12203 / NCIMB 8253 / ATH 2.4.1.) (Rhodobacter sphaeroides), this protein is Tyrosine ammonia-lyase (hutH).